A 1090-amino-acid polypeptide reads, in one-letter code: Exocyst complex component SEC5A (1090 aa).

The interval 18 to 128 is disordered; the sequence is LKEQAKRDLT…ARKEDDGAWD (111 aa). A compositionally biased stretch (low complexity) spans 45–69; it reads QQPRQQKPVAAAAAPPKKSAAAVRK. Basic and acidic residues predominate over residues 109 to 124; sequence RGSDVREKGRARKEDD. Serine 180 carries the post-translational modification Phosphoserine. Disordered regions lie at residues 759–783, 987–1010, and 1046–1090; these read TSRQ…NTYG, VETP…DKQS, and APLE…PRRR. The span at 998 to 1009 shows a compositional bias: basic and acidic residues; sequence RGSEDTVSDDKQ. Residues 1058 to 1082 show a composition bias toward polar residues; it reads TYSSFRGSMDSPSRNYRGSQSSGSP.

This sequence belongs to the SEC5 family. The exocyst complex is composed of SEC3, SEC5, SEC6, SEC8, SEC10, EXO70A1 and EXO84B. Interacts with SEC3A and EXO70B1. Binds to EXO70H1 and EXO70B2. Binds directly to B1L.

The protein localises to the cytoplasm. It is found in the cytosol. Its subcellular location is the secreted. The protein resides in the extracellular exosome. Component of the exocyst complex involved in the docking of exocytic vesicles with fusion sites on the plasma membrane during regulated or polarized secretion. Involved in polarized cell growth and organ morphogenesis. During cytokinesis, involved in cell plate initiation, cell plate maturation and formation of new primary cell wall. Probable component of an exocyst subcomplex specifically involved in autophagy-related, Golgi-independent membrane traffic to the vacuole. Regulates autophagosome formation and autophagy-related Golgi-independent import into the vacuole. This chain is Exocyst complex component SEC5A, found in Arabidopsis thaliana (Mouse-ear cress).